The sequence spans 293 residues: GTPase Era (293 aa).

The Era-type G domain maps to 5–174; the sequence is RTISVCIIGR…ITGKAQIAPW (170 aa). The G1 stretch occupies residues 13–20; that stretch reads GRPNSGKS. Residue 13–20 participates in GTP binding; it reads GRPNSGKS. A G2 region spans residues 39–43; the sequence is QTTRS. The interval 60 to 63 is G3; the sequence is DTPG. GTP contacts are provided by residues 60-64 and 122-125; these read DTPGI and NKID. Residues 122-125 form a G4 region; sequence NKID. A G5 region spans residues 150 to 152; the sequence is ISA. Positions 202 to 279 constitute a KH type-2 domain; sequence LQQELPYKLT…HLFLFVKVHE (78 aa).

This sequence belongs to the TRAFAC class TrmE-Era-EngA-EngB-Septin-like GTPase superfamily. Era GTPase family. Monomer.

The protein resides in the cytoplasm. It localises to the cell inner membrane. Functionally, an essential GTPase that binds both GDP and GTP, with rapid nucleotide exchange. Plays a role in 16S rRNA processing and 30S ribosomal subunit biogenesis and possibly also in cell cycle regulation and energy metabolism. The sequence is that of GTPase Era from Rickettsia akari (strain Hartford).